The chain runs to 319 residues: ATP-dependent 6-phosphofructokinase (319 aa).

G11 lines the ATP pocket. Position 21 to 25 (R21 to R25) interacts with ADP. ATP-binding positions include R72 to C73 and G102 to S105. Mg(2+) is bound at residue D103. T125–D127 provides a ligand contact to substrate. The active-site Proton acceptor is the D127. R154 is a binding site for ADP. Substrate contacts are provided by residues R162 and M169–R171. ADP is bound by residues G185–E187, R211, and K213–H215. Residues E222, R243, and H249–R252 each bind substrate.

The protein belongs to the phosphofructokinase type A (PFKA) family. ATP-dependent PFK group I subfamily. Prokaryotic clade 'B1' sub-subfamily. In terms of assembly, homotetramer. Mg(2+) serves as cofactor.

The protein resides in the cytoplasm. The catalysed reaction is beta-D-fructose 6-phosphate + ATP = beta-D-fructose 1,6-bisphosphate + ADP + H(+). Its pathway is carbohydrate degradation; glycolysis; D-glyceraldehyde 3-phosphate and glycerone phosphate from D-glucose: step 3/4. Allosterically activated by ADP and other diphosphonucleosides, and allosterically inhibited by phosphoenolpyruvate. In terms of biological role, catalyzes the phosphorylation of D-fructose 6-phosphate to fructose 1,6-bisphosphate by ATP, the first committing step of glycolysis. This chain is ATP-dependent 6-phosphofructokinase, found in Clostridium novyi (strain NT).